The following is a 749-amino-acid chain: MKKQKKILWKKGIHLAFSEKWNAGFGSFKKFYFPQNLCFLKAKLGRPVAWHRQVKHFQCNKGLHIQKTWIQDVPFCSKTKSGLATQNVSTLYPKVKRKDSKHFISSSRSLLKLQADKLLSSAKSLDHKYCREKSLLKAAPGLSANTVLGRANGHEPTTDPQASDFPMKFSGESQSPGDSGKTVVLNKHRKRVCHGCYQGLEHHRNRRPLIPKQFQLNQHRRVRASLMMYEKLSMIRFRYRIFRSQHFRTKSRVCKLRKAQRSWVQKVTGDHQENLRDNNTEGDNCNPVPSLEPKDPCRCQPYFPDMDSSAVGKGKNCHVPDGHTKENPVLDKEHGLDDTFPDQQNGCVAYNWDQSSSCPKWECTEQIHEIPLMEHPSSDKFSPETERALMALGQESGTSAVSDDREKLPVSGADKSVSSVDGPVSEEPAQNENFQMEEDGSLKQSILSSKLLDHPYCKSPLDAPLLCSEPKVENQMSGGKSSQTASPVDDEQLSTCLSGFLDEVMKKYGSLVPLSEKDVLGRLKDVFNEDFSNRKPFINREITNYRARHQKCNFRIFYNKHMLDMDDLATLDGQNWLNDQVINMYGELIMDAVPDKVHFFNSFFHRQLVTKGYNGVKRWTKKVDLFKKSLLLIPIHLEVHWSLITVTLSSRIISFYDSQGIHFKFCVENIRKYLLTEAREKNRPEFLQGWQTAVTKCIPQQKNDSDCGVFVLQYCKCLALEQPFQFSQEDMPRVRKRIYKELCECRLLD.

The span at 268-279 (TGDHQENLRDNN) shows a compositional bias: basic and acidic residues. Disordered stretches follow at residues 268–288 (TGDH…CNPV) and 394–440 (QESG…EEDG). The interval 557-718 (FYNKHMLDMD…VFVLQYCKCL (162 aa)) is protease. Active-site residues include His640, Asp657, and Cys707.

The protein belongs to the peptidase C48 family. As to quaternary structure, interacts with CCAR2.

The protein localises to the nucleus. It is found in the nucleolus. In terms of biological role, protease that catalyzes two essential functions in the SUMO pathway: processing of full-length SUMO3 to its mature form and deconjugation of SUMO2 and SUMO3 from targeted proteins. Has weak proteolytic activity against full-length SUMO1 or SUMO1 conjugates. Required for cell division. The polypeptide is Sentrin-specific protease 5 (Senp5) (Mus musculus (Mouse)).